A 335-amino-acid chain; its full sequence is Large ribosomal subunit protein uL3 (335 aa).

Disordered stretches follow at residues M1 to G35, I234 to G256, and A312 to G335. The span at R244 to G256 shows a compositional bias: polar residues.

This sequence belongs to the universal ribosomal protein uL3 family. Part of the 50S ribosomal subunit. Forms a cluster with proteins L14 and L24e.

In terms of biological role, one of the primary rRNA binding proteins, it binds directly near the 3'-end of the 23S rRNA, where it nucleates assembly of the 50S subunit. This Halobacterium salinarum (strain ATCC 29341 / DSM 671 / R1) protein is Large ribosomal subunit protein uL3.